A 204-amino-acid polypeptide reads, in one-letter code: Thymidylate kinase (204 aa).

11 to 18 contributes to the ATP binding site; that stretch reads GLDKSGKT.

It belongs to the thymidylate kinase family.

It carries out the reaction dTMP + ATP = dTDP + ADP. Its pathway is pyrimidine metabolism; dTTP biosynthesis. The sequence is that of Thymidylate kinase (TMK) from Cowpox virus (strain GRI-90 / Grishak) (CPV).